Consider the following 829-residue polypeptide: Periplasmic nitrate reductase (829 aa).

The tat-type signal signal peptide spans 1–30 (MKMTRRAFVKANAAASAAAVAGITLPASAA). The region spanning 41 to 97 (ITWDKAPCRFCGTGCSVLVGTQNGKVVATQGDPEAPVNKGLNCIKGYFLSKIMYGQD) is the 4Fe-4S Mo/W bis-MGD-type domain. Residues Cys-48, Cys-51, Cys-55, and Cys-83 each contribute to the [4Fe-4S] cluster site. Mo-bis(molybdopterin guanine dinucleotide) is bound by residues Lys-85, Gln-152, Asn-177, Cys-181, 214 to 221 (WGSNMAEM), 245 to 249 (STYYH), 264 to 266 (QSD), Met-374, Gln-378, Asn-484, 510 to 511 (SD), Lys-533, Asp-560, and 718 to 727 (TGRVLEHWHT). Phe-794 contacts substrate. Mo-bis(molybdopterin guanine dinucleotide) is bound by residues Asn-802 and Lys-819.

Belongs to the prokaryotic molybdopterin-containing oxidoreductase family. NasA/NapA/NarB subfamily. In terms of assembly, component of the periplasmic nitrate reductase NapAB complex composed of NapA and NapB. Requires [4Fe-4S] cluster as cofactor. Mo-bis(molybdopterin guanine dinucleotide) is required as a cofactor. Predicted to be exported by the Tat system. The position of the signal peptide cleavage has not been experimentally proven.

The protein localises to the periplasm. The catalysed reaction is 2 Fe(II)-[cytochrome] + nitrate + 2 H(+) = 2 Fe(III)-[cytochrome] + nitrite + H2O. Its function is as follows. Catalytic subunit of the periplasmic nitrate reductase complex NapAB. Receives electrons from NapB and catalyzes the reduction of nitrate to nitrite. This chain is Periplasmic nitrate reductase, found in Vibrio vulnificus (strain CMCP6).